We begin with the raw amino-acid sequence, 290 residues long: 4-hydroxy-tetrahydrodipicolinate synthase (290 aa).

Residue T46 coordinates pyruvate. The active-site Proton donor/acceptor is Y134. Residue K163 is the Schiff-base intermediate with substrate of the active site. V205 is a pyruvate binding site.

The protein belongs to the DapA family. Homotetramer; dimer of dimers.

It localises to the cytoplasm. The enzyme catalyses L-aspartate 4-semialdehyde + pyruvate = (2S,4S)-4-hydroxy-2,3,4,5-tetrahydrodipicolinate + H2O + H(+). It functions in the pathway amino-acid biosynthesis; L-lysine biosynthesis via DAP pathway; (S)-tetrahydrodipicolinate from L-aspartate: step 3/4. Catalyzes the condensation of (S)-aspartate-beta-semialdehyde [(S)-ASA] and pyruvate to 4-hydroxy-tetrahydrodipicolinate (HTPA). The chain is 4-hydroxy-tetrahydrodipicolinate synthase from Bacillus subtilis (strain 168).